A 125-amino-acid polypeptide reads, in one-letter code: Multifunctional methyltransferase subunit TRM112-like protein (125 aa).

In terms of domain architecture, TRM112 spans 2–119 (KLLTHNLLSS…SRGIPNMLLS (118 aa)). Residues S119 and S125 each carry the phosphoserine modification.

This sequence belongs to the TRM112 family. Part of the heterodimeric BUD23-TRM112 methyltransferase complex; this heterodimerization is necessary for the metabolic stability and activity of the catalytic subunit BUD23. Part of the heterodimeric N6AMT1-TRM112 methyltransferase complex; this heterodimerization is necessary for S-adenosyl-L-methionine-binding to N6AMT1/HEMK2. Part of the heterodimeric ALKBH8-TRM112 methyltransferase complex. Part of the heterodimeric METTL5-TRM112 methyltransferase complex; this heterodimerization is necessary for the stability of the catalytic subunit METTL5. Part of the heterodimeric THUMPD3-TRM112 methyltransferase complex; this complex forms an active tRNA methyltransferase, where TRMT112 acts as an activator of the catalytic subunit THUMPD3. Part of the heterodimeric THUMPD2-TRM112 methyltransferase complex; this complex forms an active tRNA methyltransferase, where TRMT112 acts as an activator of the catalytic subunit THUMPD2. Part of the heterodimeric TRMT11-TRM112 methyltransferase complex; this complex forms an active tRNA methyltransferase, where TRMT112 acts as an activator of the catalytic subunit TRMT11.

It localises to the nucleus. The protein localises to the nucleoplasm. The protein resides in the cytoplasm. It is found in the perinuclear region. Functionally, acts as an activator of both rRNA/tRNA and protein methyltransferases. Together with methyltransferase BUD23, methylates the N(7) position of a guanine in 18S rRNA. The heterodimer with N6AMT1/HEMK2 catalyzes N5-methylation of ETF1 on 'Gln-185', using S-adenosyl L-methionine as methyl donor. The heterodimer with N6AMT1/HEMK2 also monomethylates 'Lys-12' of histone H4 (H4K12me1). The heterodimer with ALKBH8 catalyzes the methylation of 5-carboxymethyl uridine to 5-methylcarboxymethyl uridine at the wobble position of the anticodon loop in target tRNA species. Together with methyltransferase THUMPD3, catalyzes the formation of N(2)-methylguanosine at position 6 in a broad range of tRNA substrates and at position 7 of tRNA(Trp). Involved in the pre-rRNA processing steps leading to small-subunit rRNA production. Together with methyltransferase METTL5, specifically methylates the 6th position of adenine in position 1832 of 18S rRNA. This Homo sapiens (Human) protein is Multifunctional methyltransferase subunit TRM112-like protein.